Reading from the N-terminus, the 71-residue chain is Plasticin-DA1 (71 aa).

Residues 1–22 (MAFLKKSLFLVLFLALVPLSIC) form the signal peptide. Positions 23–42 (EAEKREEENEEKQEDDDESE) are excised as a propeptide. Positions 25–45 (EKREEENEEKQEDDDESEKKR) are disordered. A compositionally biased stretch (acidic residues) spans 30–40 (ENEEKQEDDDE). Residue Gly-68 is modified to Glycine amide. Residues 70–71 (ER) constitute a propeptide that is removed on maturation.

This sequence belongs to the frog skin active peptide (FSAP) family. Plasticin subfamily. As to expression, expressed by the skin glands.

It is found in the secreted. The protein localises to the target cell membrane. Its function is as follows. Neutral peptide with no antimicrobial activity. Does not permeate bacterial membranes. May act in synergy with cationic peptides by enhancing their activity. Has a moderate hemolytic activity. It interacts with zwitterionic phospholipids (DMPC) without perturbing either the interface or inside of the bilayer, whereas it causes little perturbations at the interface peptide-anionic vesicles (DMPG) as well as in the bilayer alkyl chains. The polypeptide is Plasticin-DA1 (Agalychnis dacnicolor (Giant Mexican leaf frog)).